Here is a 234-residue protein sequence, read N- to C-terminus: Fibrillarin-like rRNA/tRNA 2'-O-methyltransferase (234 aa).

S-adenosyl-L-methionine-binding positions include 91-92 (TT), 110-111 (EF), 137-138 (DA), and 157-160 (DVAQ).

The protein belongs to the methyltransferase superfamily. Fibrillarin family. As to quaternary structure, interacts with nop5. Component of box C/D small ribonucleoprotein (sRNP) particles that contain rpl7ae, FlpA and nop5, plus a guide RNA.

Functionally, involved in pre-rRNA and tRNA processing. Utilizes the methyl donor S-adenosyl-L-methionine to catalyze the site-specific 2'-hydroxyl methylation of ribose moieties in rRNA and tRNA. Site specificity is provided by a guide RNA that base pairs with the substrate. Methylation occurs at a characteristic distance from the sequence involved in base pairing with the guide RNA. The sequence is that of Fibrillarin-like rRNA/tRNA 2'-O-methyltransferase from Pyrobaculum calidifontis (strain DSM 21063 / JCM 11548 / VA1).